Reading from the N-terminus, the 342-residue chain is Ribosomal RNA small subunit methyltransferase C (342 aa).

It belongs to the methyltransferase superfamily. RsmC family. In terms of assembly, monomer.

The protein resides in the cytoplasm. It catalyses the reaction guanosine(1207) in 16S rRNA + S-adenosyl-L-methionine = N(2)-methylguanosine(1207) in 16S rRNA + S-adenosyl-L-homocysteine + H(+). In terms of biological role, specifically methylates the guanine in position 1207 of 16S rRNA in the 30S particle. This Cronobacter sakazakii (strain ATCC BAA-894) (Enterobacter sakazakii) protein is Ribosomal RNA small subunit methyltransferase C.